The chain runs to 436 residues: Acetyl-CoA decarbonylase/synthase complex subunit delta 1 (436 aa).

It belongs to the CdhD family. In terms of assembly, heterodimer of delta and gamma chains. The ACDS complex is made up of alpha, epsilon, beta, gamma and delta chains with a probable stoichiometry of (alpha(2)epsilon(2))(4)-beta(8)-(gamma(1)delta(1))(8) (Potential).

It functions in the pathway one-carbon metabolism; methanogenesis from acetate. In terms of biological role, part of a complex that catalyzes the reversible cleavage of acetyl-CoA, allowing growth on acetate as sole source of carbon and energy. Probably maintains the overall quaternary structure of the ACDS complex. The chain is Acetyl-CoA decarbonylase/synthase complex subunit delta 1 (cdhD1) from Methanosarcina thermophila.